The primary structure comprises 153 residues: Transcriptional repressor NrdR (153 aa).

The segment at 3–34 is a zinc-finger region; the sequence is CPSCHHSGTRVLESRPVEEGRSIRRRRECEQC. An ATP-cone domain is found at 49 to 139; it reads LIVVKKEGTR…VYRQFKDINV (91 aa).

It belongs to the NrdR family. Requires Zn(2+) as cofactor.

Negatively regulates transcription of bacterial ribonucleotide reductase nrd genes and operons by binding to NrdR-boxes. In Geobacillus kaustophilus (strain HTA426), this protein is Transcriptional repressor NrdR.